The following is a 153-amino-acid chain: Heavy metal-associated isoprenylated plant protein 25 (153 aa).

Residues Leu24–Glu88 enclose the HMA domain. Residues Cys35 and Cys38 each contribute to the a metal cation site. A Cysteine methyl ester modification is found at Cys150. The S-farnesyl cysteine moiety is linked to residue Cys150. A propeptide spans Val151–Met153 (removed in mature form).

This sequence belongs to the HIPP family. As to expression, expressed in roots, shoot apical meristem, trichomes and flower buds.

It localises to the membrane. Its function is as follows. Heavy-metal-binding protein. Binds cadmium. May be involved in cadmium transport and play a role in cadmium detoxification. The chain is Heavy metal-associated isoprenylated plant protein 25 from Arabidopsis thaliana (Mouse-ear cress).